The primary structure comprises 245 residues: Phosphoadenosine 5'-phosphosulfate reductase (245 aa).

The Nucleophile; cysteine thiosulfonate intermediate role is filled by Cys-239.

The protein belongs to the PAPS reductase family. CysH subfamily.

Its subcellular location is the cytoplasm. The catalysed reaction is [thioredoxin]-disulfide + sulfite + adenosine 3',5'-bisphosphate + 2 H(+) = [thioredoxin]-dithiol + 3'-phosphoadenylyl sulfate. It functions in the pathway sulfur metabolism; hydrogen sulfide biosynthesis; sulfite from sulfate: step 3/3. Catalyzes the formation of sulfite from phosphoadenosine 5'-phosphosulfate (PAPS) using thioredoxin as an electron donor. The chain is Phosphoadenosine 5'-phosphosulfate reductase from Shewanella oneidensis (strain ATCC 700550 / JCM 31522 / CIP 106686 / LMG 19005 / NCIMB 14063 / MR-1).